The sequence spans 677 residues: UvrABC system protein B (677 aa).

The Helicase ATP-binding domain occupies 25 to 412 (QGVNGGERYQ…GGEVAQQVIR (388 aa)). 38–45 (GATGTGKT) is a binding site for ATP. The Beta-hairpin motif lies at 91-114 (YYDYYQPEAYVPVSDTYIAKTASI). The Helicase C-terminal domain maps to 429 to 591 (QVDDLLGEIR…IVPTAAGKKA (163 aa)). Residues 639–674 (PELIDQLEGKMKEAAKKLDFEDAANLRDRIKQLRQK) form the UVR domain.

The protein belongs to the UvrB family. Forms a heterotetramer with UvrA during the search for lesions. Interacts with UvrC in an incision complex.

It localises to the cytoplasm. Functionally, the UvrABC repair system catalyzes the recognition and processing of DNA lesions. A damage recognition complex composed of 2 UvrA and 2 UvrB subunits scans DNA for abnormalities. Upon binding of the UvrA(2)B(2) complex to a putative damaged site, the DNA wraps around one UvrB monomer. DNA wrap is dependent on ATP binding by UvrB and probably causes local melting of the DNA helix, facilitating insertion of UvrB beta-hairpin between the DNA strands. Then UvrB probes one DNA strand for the presence of a lesion. If a lesion is found the UvrA subunits dissociate and the UvrB-DNA preincision complex is formed. This complex is subsequently bound by UvrC and the second UvrB is released. If no lesion is found, the DNA wraps around the other UvrB subunit that will check the other stand for damage. The polypeptide is UvrABC system protein B (Parasynechococcus marenigrum (strain WH8102)).